The chain runs to 319 residues: Tetrahydromethanopterin S-methyltransferase subunit H (319 aa).

It belongs to the MtrH family. In terms of assembly, the complex is composed of 8 subunits; MtrA, MtrB, MtrC, MtrD, MtrE, MtrF, MtrG and MtrH.

It carries out the reaction 5-methyl-5,6,7,8-tetrahydromethanopterin + coenzyme M + 2 Na(+)(in) = 5,6,7,8-tetrahydromethanopterin + methyl-coenzyme M + 2 Na(+)(out). It functions in the pathway one-carbon metabolism; methanogenesis from CO(2); methyl-coenzyme M from 5,10-methylene-5,6,7,8-tetrahydromethanopterin: step 2/2. In terms of biological role, part of a complex that catalyzes the formation of methyl-coenzyme M and tetrahydromethanopterin from coenzyme M and methyl-tetrahydromethanopterin. This is an energy-conserving, sodium-ion translocating step. MtrH catalyzes the transfer of the methyl group from methyl-tetrahydromethanopterin to the corrinoid prosthetic group of MtrA. In Methanococcus maripaludis (strain C5 / ATCC BAA-1333), this protein is Tetrahydromethanopterin S-methyltransferase subunit H.